A 219-amino-acid chain; its full sequence is 3,4-dihydroxy-2-butanone 4-phosphate synthase (219 aa).

D-ribulose 5-phosphate-binding positions include Arg37–Glu38, Asp42, Arg150–Thr154, and Glu174. A Mg(2+)-binding site is contributed by Glu38. His153 lines the Mg(2+) pocket.

It belongs to the DHBP synthase family. In terms of assembly, homodimer. Mg(2+) is required as a cofactor. The cofactor is Mn(2+).

It catalyses the reaction D-ribulose 5-phosphate = (2S)-2-hydroxy-3-oxobutyl phosphate + formate + H(+). Its pathway is cofactor biosynthesis; riboflavin biosynthesis; 2-hydroxy-3-oxobutyl phosphate from D-ribulose 5-phosphate: step 1/1. Functionally, catalyzes the conversion of D-ribulose 5-phosphate to formate and 3,4-dihydroxy-2-butanone 4-phosphate. The chain is 3,4-dihydroxy-2-butanone 4-phosphate synthase from Oleidesulfovibrio alaskensis (strain ATCC BAA-1058 / DSM 17464 / G20) (Desulfovibrio alaskensis).